A 652-amino-acid chain; its full sequence is Set1 complex component ash2 (652 aa).

Residues 1-32 (MLAHGSNDYGVSLKGNKTGSSPSKASSLNWNE) are disordered. Residues 15 to 32 (GNKTGSSPSKASSLNWNE) show a composition bias toward polar residues. The segment at 40–94 (NTYCYCGKDRNLRFPDLQCSVCLNMFHLSCLSPPCTSMMGFSTNYQFVCKHCTED) adopts a PHD-type zinc-finger fold. Residues Cys43, Cys45, Cys58, Cys61, His66, Cys69, Cys88, and Cys91 each contribute to the Zn(2+) site. A disordered region spans residues 234-270 (RLVETETPPPSSSKLKEDYKDSKREMKRSNTPWSNAS). The segment covering 247–261 (KLKEDYKDSKREMKR) has biased composition (basic and acidic residues). The region spanning 330 to 519 (EAAKDLPNVM…KHNRYIDLPY (190 aa)) is the B30.2/SPRY domain.

It belongs to the cclA family. Component of the Set1 complex composed of ash2, sdc1, set1, shg1, spp1, swd1, swd2 and swd3. Component of the Lid2 complex composed of ash2, jmj3, lid2, sdc1 and snt2.

It is found in the nucleus. Its function is as follows. Component of the COMPASS (Set1C) complex that specifically mono-, di- and trimethylates histone H3 to form H3K4me1/2/3, which subsequently plays a role in telomere length maintenance and transcription elongation regulation. Regulates MAPK pathway and sporulation through H3K4 methylation. In Schizosaccharomyces pombe (strain 972 / ATCC 24843) (Fission yeast), this protein is Set1 complex component ash2.